Here is a 106-residue protein sequence, read N- to C-terminus: uncharacterized protein (106 aa).

This is an uncharacterized protein from Saccharomyces cerevisiae (strain ATCC 204508 / S288c) (Baker's yeast).